Reading from the N-terminus, the 128-residue chain is Large ribosomal subunit protein bL17 (128 aa).

This sequence belongs to the bacterial ribosomal protein bL17 family. As to quaternary structure, part of the 50S ribosomal subunit. Contacts protein L32.

The protein is Large ribosomal subunit protein bL17 of Petrotoga mobilis (strain DSM 10674 / SJ95).